The sequence spans 142 residues: Putative pre-16S rRNA nuclease (142 aa).

It belongs to the YqgF nuclease family.

The protein resides in the cytoplasm. Its function is as follows. Could be a nuclease involved in processing of the 5'-end of pre-16S rRNA. The protein is Putative pre-16S rRNA nuclease of Staphylococcus carnosus (strain TM300).